Reading from the N-terminus, the 792-residue chain is Probable exo-1,4-beta-xylosidase xlnD (792 aa).

The first 20 residues, 1–20, serve as a signal peptide directing secretion; it reads MSVAKSIAAVLVALLPGALA. 5 N-linked (GlcNAc...) asparagine glycosylation sites follow: asparagine 23, asparagine 87, asparagine 118, asparagine 142, and asparagine 246. The active site involves aspartate 310. 8 N-linked (GlcNAc...) asparagine glycosylation sites follow: asparagine 326, asparagine 385, asparagine 404, asparagine 440, asparagine 477, asparagine 518, asparagine 679, and asparagine 701.

This sequence belongs to the glycosyl hydrolase 3 family.

It localises to the secreted. It catalyses the reaction Hydrolysis of (1-&gt;4)-beta-D-xylans, to remove successive D-xylose residues from the non-reducing termini.. Its pathway is glycan degradation; xylan degradation. Its function is as follows. Xylan 1,4-beta-xylosidase involved in the hydrolysis of xylan, a major structural heterogeneous polysaccharide found in plant biomass representing the second most abundant polysaccharide in the biosphere, after cellulose. The sequence is that of Probable exo-1,4-beta-xylosidase xlnD (xlnD) from Aspergillus fumigatus (strain CBS 144.89 / FGSC A1163 / CEA10) (Neosartorya fumigata).